The chain runs to 71 residues: Small ribosomal subunit protein bS21 (71 aa).

Belongs to the bacterial ribosomal protein bS21 family.

The protein is Small ribosomal subunit protein bS21 of Chromohalobacter salexigens (strain ATCC BAA-138 / DSM 3043 / CIP 106854 / NCIMB 13768 / 1H11).